Reading from the N-terminus, the 259-residue chain is Small ribosomal subunit protein uS2 (259 aa).

The protein belongs to the universal ribosomal protein uS2 family.

The protein is Small ribosomal subunit protein uS2 of Streptococcus pneumoniae (strain 70585).